We begin with the raw amino-acid sequence, 572 residues long: Hemagglutinin-neuraminidase (572 aa).

The Intravirion portion of the chain corresponds to 1–31; that stretch reads MEYWKHTNHGKDAGNELETSMATHGNKLTNK. Residues 32 to 52 traverse the membrane as a helical segment; that stretch reads IIYILWTIILVLLSIVFIIVL. Over 53–572 the chain is Virion surface; that stretch reads INSIKSEKAH…FKTEIPKSCS (520 aa). 2 disulfide bridges follow: C190/C214 and C256/C269. Residues 252-257 are involved in neuraminidase activity; sequence NRKSCS. Residues N308 and N351 are each glycosylated (N-linked (GlcNAc...) asparagine; by host). Cystine bridges form between C355–C469 and C463–C473. A glycan (N-linked (GlcNAc...) asparagine; by host) is linked at N523. An intrachain disulfide couples C535 to C544.

This sequence belongs to the paramyxoviruses hemagglutinin-neuraminidase family. As to quaternary structure, homotetramer; composed of disulfide-linked homodimers. Interacts with F protein trimer.

It localises to the virion membrane. Its subcellular location is the host cell membrane. The catalysed reaction is Hydrolysis of alpha-(2-&gt;3)-, alpha-(2-&gt;6)-, alpha-(2-&gt;8)- glycosidic linkages of terminal sialic acid residues in oligosaccharides, glycoproteins, glycolipids, colominic acid and synthetic substrates.. Functionally, attaches the virus to sialic acid-containing cell receptors and thereby initiating infection. Binding of HN protein to the receptor induces a conformational change that allows the F protein to trigger virion/cell membranes fusion. Neuraminidase activity ensures the efficient spread of the virus by dissociating the mature virions from the neuraminic acid containing glycoproteins. This is Hemagglutinin-neuraminidase (HN) from Homo sapiens (Human).